A 196-amino-acid polypeptide reads, in one-letter code: Ribosome maturation factor RimP (196 aa).

The tract at residues Leu-164–Glu-196 is disordered. A compositionally biased stretch (basic residues) spans Gly-173–Lys-182.

Belongs to the RimP family.

The protein localises to the cytoplasm. In terms of biological role, required for maturation of 30S ribosomal subunits. This Xanthomonas euvesicatoria pv. vesicatoria (strain 85-10) (Xanthomonas campestris pv. vesicatoria) protein is Ribosome maturation factor RimP.